Consider the following 292-residue polypeptide: NAD(P)H-hydrate epimerase (292 aa).

The N-terminal 52 residues, M1 to T52, are a transit peptide targeting the mitochondrion. The YjeF N-terminal domain maps to A68–L279. A (6S)-NADPHX-binding site is contributed by N122–D126. Residues N123 and D189 each contribute to the K(+) site. (6S)-NADPHX is bound by residues G193–A199 and D222. A K(+)-binding site is contributed by S225.

This sequence belongs to the NnrE/AIBP family. It depends on K(+) as a cofactor.

Its subcellular location is the mitochondrion. It localises to the secreted. The enzyme catalyses (6R)-NADHX = (6S)-NADHX. It catalyses the reaction (6R)-NADPHX = (6S)-NADPHX. Functionally, catalyzes the epimerization of the S- and R-forms of NAD(P)HX, a damaged form of NAD(P)H that is a result of enzymatic or heat-dependent hydration. This is a prerequisite for the S-specific NAD(P)H-hydrate dehydratase to allow the repair of both epimers of NAD(P)HX. The polypeptide is NAD(P)H-hydrate epimerase (Xenopus tropicalis (Western clawed frog)).